A 135-amino-acid chain; its full sequence is Small ribosomal subunit protein uS12 (135 aa).

D89 carries the post-translational modification 3-methylthioaspartic acid. The disordered stretch occupies residues 101–135; the sequence is SLDTSGVADRKQSRSKYGAKQPKAGAAAPVKGKRR. A compositionally biased stretch (low complexity) spans 116 to 135; sequence KYGAKQPKAGAAAPVKGKRR.

The protein belongs to the universal ribosomal protein uS12 family. As to quaternary structure, part of the 30S ribosomal subunit. Contacts proteins S8 and S17. May interact with IF1 in the 30S initiation complex.

With S4 and S5 plays an important role in translational accuracy. Functionally, interacts with and stabilizes bases of the 16S rRNA that are involved in tRNA selection in the A site and with the mRNA backbone. Located at the interface of the 30S and 50S subunits, it traverses the body of the 30S subunit contacting proteins on the other side and probably holding the rRNA structure together. The combined cluster of proteins S8, S12 and S17 appears to hold together the shoulder and platform of the 30S subunit. The polypeptide is Small ribosomal subunit protein uS12 (Chlorobium phaeobacteroides (strain DSM 266 / SMG 266 / 2430)).